We begin with the raw amino-acid sequence, 238 residues long: Aspartate/glutamate leucyltransferase (238 aa).

The protein belongs to the R-transferase family. Bpt subfamily.

Its subcellular location is the cytoplasm. It carries out the reaction N-terminal L-glutamyl-[protein] + L-leucyl-tRNA(Leu) = N-terminal L-leucyl-L-glutamyl-[protein] + tRNA(Leu) + H(+). The catalysed reaction is N-terminal L-aspartyl-[protein] + L-leucyl-tRNA(Leu) = N-terminal L-leucyl-L-aspartyl-[protein] + tRNA(Leu) + H(+). Functions in the N-end rule pathway of protein degradation where it conjugates Leu from its aminoacyl-tRNA to the N-termini of proteins containing an N-terminal aspartate or glutamate. This Shewanella sp. (strain ANA-3) protein is Aspartate/glutamate leucyltransferase.